A 176-amino-acid chain; its full sequence is MEFHYVAQADLELLTSSNPPASASQSTGITGGSHRARPGPVHFIDKVTDKPSHSHPFALKENWNLNPEPSSPPSPLFLEAPSRQASQHHGASPGAGTSAGCPFEKCCSTEPCLSGLGDVGRGEAASLRARPGSGASRGQGPGSRVSCRRDLGKPLHAPAGFSAGEVHTTPLGNLGA.

Polar residues predominate over residues 15–28 (TSSNPPASASQSTG). 2 disordered regions span residues 15 to 100 (TSSN…TSAG) and 125 to 176 (ASLR…NLGA). The segment covering 43-52 (FIDKVTDKPS) has biased composition (basic and acidic residues).

This is an uncharacterized protein from Homo sapiens (Human).